Reading from the N-terminus, the 152-residue chain is SsrA-binding protein (152 aa).

Belongs to the SmpB family.

Its subcellular location is the cytoplasm. Functionally, required for rescue of stalled ribosomes mediated by trans-translation. Binds to transfer-messenger RNA (tmRNA), required for stable association of tmRNA with ribosomes. tmRNA and SmpB together mimic tRNA shape, replacing the anticodon stem-loop with SmpB. tmRNA is encoded by the ssrA gene; the 2 termini fold to resemble tRNA(Ala) and it encodes a 'tag peptide', a short internal open reading frame. During trans-translation Ala-aminoacylated tmRNA acts like a tRNA, entering the A-site of stalled ribosomes, displacing the stalled mRNA. The ribosome then switches to translate the ORF on the tmRNA; the nascent peptide is terminated with the 'tag peptide' encoded by the tmRNA and targeted for degradation. The ribosome is freed to recommence translation, which seems to be the essential function of trans-translation. In Lactobacillus helveticus (strain DPC 4571), this protein is SsrA-binding protein.